The chain runs to 369 residues: Peptide chain release factor 2 (369 aa).

An N5-methylglutamine modification is found at Gln-250.

This sequence belongs to the prokaryotic/mitochondrial release factor family. Post-translationally, methylated by PrmC. Methylation increases the termination efficiency of RF2.

The protein resides in the cytoplasm. Functionally, peptide chain release factor 2 directs the termination of translation in response to the peptide chain termination codons UGA and UAA. In Rickettsia prowazekii (strain Madrid E), this protein is Peptide chain release factor 2 (prfB).